Here is a 271-residue protein sequence, read N- to C-terminus: NAD kinase (271 aa).

Asp64 serves as the catalytic Proton acceptor. NAD(+) is bound by residues 64–65 (DG), Arg69, 132–133 (NE), Lys143, Arg160, Asp162, 173–178 (TAYAMS), Ala197, and Gln231.

The protein belongs to the NAD kinase family. It depends on a divalent metal cation as a cofactor.

Its subcellular location is the cytoplasm. It carries out the reaction NAD(+) + ATP = ADP + NADP(+) + H(+). Its function is as follows. Involved in the regulation of the intracellular balance of NAD and NADP, and is a key enzyme in the biosynthesis of NADP. Catalyzes specifically the phosphorylation on 2'-hydroxyl of the adenosine moiety of NAD to yield NADP. The chain is NAD kinase from Methanocorpusculum labreanum (strain ATCC 43576 / DSM 4855 / Z).